The chain runs to 1163 residues: MPKRQDIKSILIIGAGPIVIGQACEFDYSGTQACKALKEEGYRVILVNSNPATIMTDPGLADATYVEPITPEVVAKIIAKERPDALLPTMGGQTALNTALSLRRMGVLDRYNVEMIGAKPEAIDKAEDRALFREAMAHIGLETPKSRLANATDIKDHDRKSHEAERSALKAKLSGDELDKALDELENQWNLGEGDRKQRYVNHAMAIAAQALDDVGLPAIIRPSFTLGGTGGGIAYNRSEFFEIVGSGLDASPTTEVLIEESVLGWKEYEMEVVRDKADNCIIICSIENIDPMGVHTGDSITVAPALTLTDKEYQIMRNASIAVLREIGVETGGSNVQFAVNPENGRLVVIEMNPRVSRSSALASKATGFPIAKIAAKLAVGYTLDELENDITGGATPASFEPSIDYVVTKIPRFAFEKFPGAEPTLTTAMKSVGEVMAIGRTFAESLQKALRGLETGLTGLDEIEVPDFDDNGDGRNAIRAALGTPTPDRLRMVAQALRLGMSEAEVHEACKIDPWFIAQFKAIVDMEARIREHGLPADAENLRMLKAMGFSDARLATLTGKRPKEVAELRNALNVRPVYKRIDTCAAEFASPTAYMYSTYETPFVGAARSEAQVSDRKKVVILGGGPNRIGQGIEFDYCCCHAAFALKDAGYEAIMINCNPETVSTDYDTSDRLYFEPLTAEDVIEIMRAEQENGTLHGVIVQFGGQTPLKLAEALEKNGIPILGTAPDAIDLAEDRDRFQKLLMKLDLNQPNNGIAYSVEQARLVAGEIGFPLVVRPSYVLGGRAMQIIHSESMLQSYLLDTVPGLVPEDIKQRYPNDKTGQINTLLGKNPLLFDSYLTNAIEVDVDCLCDGKDVFVSGIMEHIEEAGIHSGDSACSLPVHSLGTDMVDELERQTGALARALNVGGLMNVQFAIKDGTIYVLEVNPRASRTVPFVAKTIGAPIAKIAARVMAGEMLDEAIAAYGKKPNPRNLKHIAVKEAVFPFARFPGVDTLLGPEMRSTGEVIGLDTDYALAFAKSQLGAGVDLPRDGTVFVSVRDEDKERVLPAIRILSDIGFKVMATGGTARFLGEQGIVATKINKVLEGRPHVEDAIRNRQVQLVINTTDGNKAISDSKSLRRATLMQKVPYYTTMAGAEAAALAIKALKAGNLEVRPLQSYFET.

Residues 1-456 are carboxyphosphate synthetic domain; sequence MPKRQDIKSI…SLQKALRGLE (456 aa). ATP is bound at residue Arg-129. The tract at residues 148–170 is disordered; that stretch reads LANATDIKDHDRKSHEAERSALK. Residues 153–170 are compositionally biased toward basic and acidic residues; it reads DIKDHDRKSHEAERSALK. The ATP-grasp 1 domain maps to 185 to 381; the sequence is LENQWNLGEG…IAKIAAKLAV (197 aa). ATP contacts are provided by Arg-222, Gly-228, Gly-229, Glu-261, Val-263, Glu-268, Gly-294, Val-295, His-296, Gln-338, and Glu-352. Residues Gln-338, Glu-352, and Asn-354 each coordinate Mg(2+). Mn(2+) is bound by residues Gln-338, Glu-352, and Asn-354. The oligomerization domain stretch occupies residues 457–614; it reads TGLTGLDEIE…PFVGAARSEA (158 aa). Residues 615-1026 are carbamoyl phosphate synthetic domain; that stretch reads QVSDRKKVVI…AFAKSQLGAG (412 aa). The 213-residue stretch at 743–955 folds into the ATP-grasp 2 domain; sequence QKLLMKLDLN…IAKIAARVMA (213 aa). The ATP site is built by Arg-779, Ser-839, Leu-841, Glu-846, Gly-871, Ile-872, His-873, Ser-874, Gln-914, and Glu-926. Mg(2+) is bound by residues Gln-914, Glu-926, and Asn-928. Positions 914, 926, and 928 each coordinate Mn(2+). In terms of domain architecture, MGS-like spans 1027–1163; that stretch reads VDLPRDGTVF…VRPLQSYFET (137 aa). The segment at 1027-1163 is allosteric domain; the sequence is VDLPRDGTVF…VRPLQSYFET (137 aa).

Belongs to the CarB family. Composed of two chains; the small (or glutamine) chain promotes the hydrolysis of glutamine to ammonia, which is used by the large (or ammonia) chain to synthesize carbamoyl phosphate. Tetramer of heterodimers (alpha,beta)4. The cofactor is Mg(2+). Requires Mn(2+) as cofactor.

It catalyses the reaction hydrogencarbonate + L-glutamine + 2 ATP + H2O = carbamoyl phosphate + L-glutamate + 2 ADP + phosphate + 2 H(+). It carries out the reaction hydrogencarbonate + NH4(+) + 2 ATP = carbamoyl phosphate + 2 ADP + phosphate + 2 H(+). Its pathway is amino-acid biosynthesis; L-arginine biosynthesis; carbamoyl phosphate from bicarbonate: step 1/1. It functions in the pathway pyrimidine metabolism; UMP biosynthesis via de novo pathway; (S)-dihydroorotate from bicarbonate: step 1/3. Large subunit of the glutamine-dependent carbamoyl phosphate synthetase (CPSase). CPSase catalyzes the formation of carbamoyl phosphate from the ammonia moiety of glutamine, carbonate, and phosphate donated by ATP, constituting the first step of 2 biosynthetic pathways, one leading to arginine and/or urea and the other to pyrimidine nucleotides. The large subunit (synthetase) binds the substrates ammonia (free or transferred from glutamine from the small subunit), hydrogencarbonate and ATP and carries out an ATP-coupled ligase reaction, activating hydrogencarbonate by forming carboxy phosphate which reacts with ammonia to form carbamoyl phosphate. The polypeptide is Carbamoyl phosphate synthase large chain (Rhizobium meliloti (strain 1021) (Ensifer meliloti)).